Reading from the N-terminus, the 419-residue chain is eIF5-mimic protein 1 (419 aa).

The disordered stretch occupies residues 1–22 (MNKHQKPVLTGQRFKTRKRDEK). At Lys-117 the chain carries N6-acetyllysine. One can recognise a W2 domain in the interval 248–415 (VQQSLGTRKE…QNAEEESESE (168 aa)). A phosphoserine mark is found at Ser-412 and Ser-414.

It belongs to the BZW family. In terms of assembly, interacts with EIF3E, EIF2S2 and EIF3C.

It is found in the cytoplasm. Translation initiation regulator which represses non-AUG initiated translation and repeat-associated non-AUG (RAN) initiated translation by acting as a competitive inhibitor of eukaryotic translation initiation factor 5 (EIF5) function. Increases the accuracy of translation initiation by impeding EIF5-dependent translation from non-AUG codons by competing with it for interaction with EIF2S2 within the 43S pre-initiation complex (PIC) in an EIF3C-binding dependent manner. The sequence is that of eIF5-mimic protein 1 (BZW2) from Macaca fascicularis (Crab-eating macaque).